Consider the following 500-residue polypeptide: Matrilin-1 (500 aa).

Positions Met-1–Ser-29 are cleaved as a signal peptide. The VWFA 1 domain occupies Leu-30–Val-226. Asn-80 carries N-linked (GlcNAc...) asparagine glycosylation. An EGF-like domain is found at Val-227–Asn-267. 3 disulfide bridges follow: Cys-231/Cys-242, Cys-238/Cys-251, and Cys-253/Cys-266. The region spanning Val-268–Val-457 is the VWFA 2 domain. Asn-348 carries an N-linked (GlcNAc...) asparagine glycan. A coiled-coil region spans residues Glu-471 to Ile-499.

As to quaternary structure, homotrimer. Part of a complex composed of MATN1 (via VWFA1 domain), type 2 collagens and type 6 collagens. Forms a complex (via covalent bonds) with ACAN; the interaction increases in abundance with increasing age of the organism via an increase in occupancy of MATN1 binding sites. Interacts with COMP. N-glycosylated; reduces binding affinity for type 2 collagens. As to expression, expressed in femoral head articular cartilage. Expressed in the trachea and extraskeletal tissue around the eye.

The protein resides in the secreted. Its subcellular location is the extracellular space. The protein localises to the extracellular matrix. Its function is as follows. A major component of the extracellular matrix of non-articular cartilage. Binds to type 2 collagens and forms long concatenated protein networks as part of the extracellular matrix. Required for the network-like organization and bundling of collagen fibrils surrounding chondrocytes in the zones of maturation and hypertrophy. Required for mechanotransduction and adaption to mechanical loading in cartilage chondrocytes, resulting in an increase in expression of the extracellular matrix components ACAN and COL2A1. Acts as a moderator of angiogenesis in response to injury. This is Matrilin-1 from Mus musculus (Mouse).